We begin with the raw amino-acid sequence, 975 residues long: Glycine dehydrogenase (decarboxylating) (975 aa).

Residue lysine 723 is modified to N6-(pyridoxal phosphate)lysine.

The protein belongs to the GcvP family. In terms of assembly, the glycine cleavage system is composed of four proteins: P, T, L and H. Requires pyridoxal 5'-phosphate as cofactor.

The catalysed reaction is N(6)-[(R)-lipoyl]-L-lysyl-[glycine-cleavage complex H protein] + glycine + H(+) = N(6)-[(R)-S(8)-aminomethyldihydrolipoyl]-L-lysyl-[glycine-cleavage complex H protein] + CO2. Its function is as follows. The glycine cleavage system catalyzes the degradation of glycine. The P protein binds the alpha-amino group of glycine through its pyridoxal phosphate cofactor; CO(2) is released and the remaining methylamine moiety is then transferred to the lipoamide cofactor of the H protein. This chain is Glycine dehydrogenase (decarboxylating), found in Burkholderia lata (strain ATCC 17760 / DSM 23089 / LMG 22485 / NCIMB 9086 / R18194 / 383).